We begin with the raw amino-acid sequence, 571 residues long: Proline--tRNA ligase (571 aa).

It belongs to the class-II aminoacyl-tRNA synthetase family. ProS type 1 subfamily. Homodimer.

It localises to the cytoplasm. The catalysed reaction is tRNA(Pro) + L-proline + ATP = L-prolyl-tRNA(Pro) + AMP + diphosphate. In terms of biological role, catalyzes the attachment of proline to tRNA(Pro) in a two-step reaction: proline is first activated by ATP to form Pro-AMP and then transferred to the acceptor end of tRNA(Pro). As ProRS can inadvertently accommodate and process non-cognate amino acids such as alanine and cysteine, to avoid such errors it has two additional distinct editing activities against alanine. One activity is designated as 'pretransfer' editing and involves the tRNA(Pro)-independent hydrolysis of activated Ala-AMP. The other activity is designated 'posttransfer' editing and involves deacylation of mischarged Ala-tRNA(Pro). The misacylated Cys-tRNA(Pro) is not edited by ProRS. In Pseudomonas fluorescens (strain Pf0-1), this protein is Proline--tRNA ligase.